Reading from the N-terminus, the 726-residue chain is Myb-like protein Z (726 aa).

Disordered stretches follow at residues 15–109 (DSND…SLSN), 124–149 (ASPSKSSENSPTIHTSSLSPNSYHPY), 161–239 (HYVS…TKQQ), and 272–303 (LIPSSPTRSPSGGSGSESEENDGESSPNNMRS). Over residues 18–39 (DNNNNNNNNNNSNNNNNNNNNN) the composition is skewed to low complexity. The span at 45-80 (SSATSSPTGQDSTIDRPNSPSSSIKFTYPSKNSIVT) shows a compositional bias: polar residues. Residues 81 to 108 (SPSSLQLPSPSFSSSSSSSSSSSSSSLS) are compositionally biased toward low complexity. A compositionally biased stretch (polar residues) spans 124 to 147 (ASPSKSSENSPTIHTSSLSPNSYH). Residues 165–177 (NNNNNNNNNNNNN) are compositionally biased toward low complexity. Over residues 183 to 209 (SSELYNTSPSISSKTTPNGSSTNNSPF) the composition is skewed to polar residues. The segment covering 221–239 (NNNNNNNNDRNENNTTKQQ) has biased composition (low complexity). Residues 329–388 (IPIATRKLWSQEECCRLLEMVFQRDPQSVTSKESELRWRSIASTLGRTVTSTRKKYMRLM) enclose the Myb-like domain. Low complexity predominate over residues 516-651 (KQIQQQQKQK…NNNYRSSLSP (136 aa)). A disordered region spans residues 516 to 726 (KQIQQQQKQK…NNNNYNNYHN (211 aa)). Positions 661–675 (QSPQQKSNNENQQNF) are enriched in polar residues. Positions 709–726 (NLNNNNNNNNNNYNNYHN) are enriched in low complexity.

The polypeptide is Myb-like protein Z (mybZ) (Dictyostelium discoideum (Social amoeba)).